The sequence spans 217 residues: Adenylate kinase (217 aa).

Residue 10 to 15 (GAGKGT) participates in ATP binding. The NMP stretch occupies residues 30 to 59 (STGDMLRAAVKAGSPLGVKVKDIMASGQLV). AMP-binding positions include Thr-31, Arg-36, 57-59 (QLV), 85-88 (GFPR), and Gln-92. The tract at residues 122-159 (GRRVHEASGRIYHVTHNPPKTEGVDDITGEPLVQRDDD) is LID. ATP contacts are provided by residues Arg-123 and 132-133 (IY). AMP is bound by residues Arg-156 and Arg-167. Gly-202 contacts ATP.

Belongs to the adenylate kinase family. Monomer.

The protein localises to the cytoplasm. The catalysed reaction is AMP + ATP = 2 ADP. The protein operates within purine metabolism; AMP biosynthesis via salvage pathway; AMP from ADP: step 1/1. Its function is as follows. Catalyzes the reversible transfer of the terminal phosphate group between ATP and AMP. Plays an important role in cellular energy homeostasis and in adenine nucleotide metabolism. The sequence is that of Adenylate kinase from Teredinibacter turnerae (strain ATCC 39867 / T7901).